We begin with the raw amino-acid sequence, 204 residues long: WW domain-containing protein C11B10.08 (204 aa).

One can recognise a WW domain in the interval 7–43; that stretch reads EGLPNGWVAQWDERYKCYFYVNESDPKAKPQWECPVR. Residues 32 to 117 are disordered; it reads PKAKPQWECP…GYPQQPYYYP (86 aa). Composition is skewed to low complexity over residues 66–100 and 108–117; these read YSNS…GAAP and GYPQQPYYYP.

The protein localises to the cytoplasm. It is found in the nucleus. The chain is WW domain-containing protein C11B10.08 from Schizosaccharomyces pombe (strain 972 / ATCC 24843) (Fission yeast).